The following is a 269-amino-acid chain: 5'-nucleotidase SurE (269 aa).

Positions 11, 12, 43, and 101 each coordinate a divalent metal cation.

This sequence belongs to the SurE nucleotidase family. It depends on a divalent metal cation as a cofactor.

The protein localises to the cytoplasm. It catalyses the reaction a ribonucleoside 5'-phosphate + H2O = a ribonucleoside + phosphate. Its function is as follows. Nucleotidase that shows phosphatase activity on nucleoside 5'-monophosphates. The chain is 5'-nucleotidase SurE from Prochlorococcus marinus (strain MIT 9303).